The primary structure comprises 921 residues: Protein translocase subunit SecA (921 aa).

Residues glutamine 86, 104–108 (GEGKT), and aspartate 512 contribute to the ATP site. Zn(2+) is bound by residues cysteine 905, cysteine 907, cysteine 916, and histidine 917.

It belongs to the SecA family. In terms of assembly, monomer and homodimer. Part of the essential Sec protein translocation apparatus which comprises SecA, SecYEG and auxiliary proteins SecDF-YajC and YidC. The cofactor is Zn(2+).

Its subcellular location is the cell inner membrane. The protein localises to the cytoplasm. It catalyses the reaction ATP + H2O + cellular proteinSide 1 = ADP + phosphate + cellular proteinSide 2.. Functionally, part of the Sec protein translocase complex. Interacts with the SecYEG preprotein conducting channel. Has a central role in coupling the hydrolysis of ATP to the transfer of proteins into and across the cell membrane, serving both as a receptor for the preprotein-SecB complex and as an ATP-driven molecular motor driving the stepwise translocation of polypeptide chains across the membrane. The protein is Protein translocase subunit SecA of Caulobacter sp. (strain K31).